The primary structure comprises 340 residues: Putative inactive cytochrome P450 family member 4Z2 (340 aa).

The Cytoplasmic portion of the chain corresponds to 1–9 (MEPSWLQEL). The helical; Signal-anchor for type II membrane protein transmembrane segment at 10–30 (MAHPFLLLILLCMSLLLFQVI) threads the bilayer. Over 31–340 (RLYQRRRWTI…AKYPEHQQRC (310 aa)) the chain is Lumenal.

The protein belongs to the cytochrome P450 family. Requires heme as cofactor. In terms of tissue distribution, detected at low levels in mammary gland and mammary carcinoma.

The protein resides in the membrane. The chain is Putative inactive cytochrome P450 family member 4Z2 (CYP4Z2P) from Homo sapiens (Human).